A 260-amino-acid polypeptide reads, in one-letter code: Phosphatidate cytidylyltransferase (260 aa).

7 consecutive transmembrane segments (helical) span residues Ile-9–Phe-29, Met-46–Leu-66, Ala-70–Leu-90, Phe-102–Phe-122, Leu-130–Phe-150, Phe-172–Leu-192, and Ile-196–Val-216.

The protein belongs to the CDS family.

It localises to the cell membrane. The enzyme catalyses a 1,2-diacyl-sn-glycero-3-phosphate + CTP + H(+) = a CDP-1,2-diacyl-sn-glycerol + diphosphate. The protein operates within phospholipid metabolism; CDP-diacylglycerol biosynthesis; CDP-diacylglycerol from sn-glycerol 3-phosphate: step 3/3. The chain is Phosphatidate cytidylyltransferase (cdsA) from Staphylococcus epidermidis (strain ATCC 35984 / DSM 28319 / BCRC 17069 / CCUG 31568 / BM 3577 / RP62A).